The chain runs to 132 residues: ATP synthase epsilon chain, chloroplastic (132 aa).

This sequence belongs to the ATPase epsilon chain family. In terms of assembly, F-type ATPases have 2 components, CF(1) - the catalytic core - and CF(0) - the membrane proton channel. CF(1) has five subunits: alpha(3), beta(3), gamma(1), delta(1), epsilon(1). CF(0) has three main subunits: a, b and c.

It is found in the plastid. It localises to the chloroplast thylakoid membrane. In terms of biological role, produces ATP from ADP in the presence of a proton gradient across the membrane. This is ATP synthase epsilon chain, chloroplastic from Coffea arabica (Arabian coffee).